Reading from the N-terminus, the 180-residue chain is Adenine phosphoribosyltransferase (180 aa).

The protein belongs to the purine/pyrimidine phosphoribosyltransferase family. Homodimer.

The protein localises to the cytoplasm. The catalysed reaction is AMP + diphosphate = 5-phospho-alpha-D-ribose 1-diphosphate + adenine. Its pathway is purine metabolism; AMP biosynthesis via salvage pathway; AMP from adenine: step 1/1. Its function is as follows. Catalyzes a salvage reaction resulting in the formation of AMP, that is energically less costly than de novo synthesis. This Butyrivibrio fibrisolvens protein is Adenine phosphoribosyltransferase.